Here is a 186-residue protein sequence, read N- to C-terminus: Probable peptidyl-tRNA hydrolase 2 (186 aa).

Belongs to the PTH2 family.

The enzyme catalyses an N-acyl-L-alpha-aminoacyl-tRNA + H2O = an N-acyl-L-amino acid + a tRNA + H(+). Functionally, the natural substrate for this enzyme may be peptidyl-tRNAs which drop off the ribosome during protein synthesis. The polypeptide is Probable peptidyl-tRNA hydrolase 2 (Drosophila melanogaster (Fruit fly)).